We begin with the raw amino-acid sequence, 134 residues long: Small ribosomal subunit protein uS11 (134 aa).

This sequence belongs to the universal ribosomal protein uS11 family. As to quaternary structure, part of the 30S ribosomal subunit. Interacts with proteins S7 and S18. Binds to IF-3.

Located on the platform of the 30S subunit, it bridges several disparate RNA helices of the 16S rRNA. Forms part of the Shine-Dalgarno cleft in the 70S ribosome. In Albidiferax ferrireducens (strain ATCC BAA-621 / DSM 15236 / T118) (Rhodoferax ferrireducens), this protein is Small ribosomal subunit protein uS11.